The following is a 746-amino-acid chain: Polyribonucleotide nucleotidyltransferase (746 aa).

Positions 519 and 525 each coordinate Mg(2+). One can recognise a KH domain in the interval 585-644; the sequence is PRVIAVKIPVDKIGEVIGPKGKMINQIQEDTGADISIEDDGTVYIGATNGPSADAARSAI. Positions 656–728 constitute an S1 motif domain; the sequence is GERYLGTVVK…DRGKLSLSPV (73 aa).

It belongs to the polyribonucleotide nucleotidyltransferase family. The cofactor is Mg(2+).

The protein localises to the cytoplasm. The catalysed reaction is RNA(n+1) + phosphate = RNA(n) + a ribonucleoside 5'-diphosphate. Its function is as follows. Involved in mRNA degradation. Catalyzes the phosphorolysis of single-stranded polyribonucleotides processively in the 3'- to 5'-direction. The sequence is that of Polyribonucleotide nucleotidyltransferase from Arthrobacter sp. (strain FB24).